We begin with the raw amino-acid sequence, 218 residues long: Small ribosomal subunit protein uS3c (218 aa).

Residues 47-118 (VQKNMRTSSG…KLNIAVTRIA (72 aa)) form the KH type-2 domain.

The protein belongs to the universal ribosomal protein uS3 family. In terms of assembly, part of the 30S ribosomal subunit.

The protein resides in the plastid. The protein localises to the chloroplast. The sequence is that of Small ribosomal subunit protein uS3c (rps3) from Nicotiana sylvestris (Wood tobacco).